The chain runs to 324 residues: Probable UDP-sugar transporter protein SLC35A4 (324 aa).

Residues 1-18 (MSVEDGGLPGLGGPGQAR) are Cytoplasmic-facing. A helical transmembrane segment spans residues 19 to 39 (WTLMLLLSTATYGAHAPLLAL). At 40 to 52 (CHVDGRVPFRPSS) the chain is on the lumenal side. Residues 53-73 (AVLLTELTKLLLCALSLLVGW) form a helical membrane-spanning segment. The Cytoplasmic portion of the chain corresponds to 74–85 (QAWPPRTPPWRQ). A helical membrane pass occupies residues 86–106 (AAPFALSALLYGANNNLVIHL). The Lumenal segment spans residues 107–140 (QHYMDPSTYQVLSNLKIGSTALFYCLCLRRRLSA). The chain crosses the membrane as a helical span at residues 141–161 (RQGLALLLLMAAGACYAAGGL). At 162-177 (RDPGSPLPESPSTAAS) the chain is on the cytoplasmic side. The helical transmembrane segment at 178–198 (GPVPLHVTAPGLLLLLLYCLI) threads the bilayer. The Lumenal segment spans residues 199–214 (SGLSSVYTELLLKRQR). Residues 215–235 (LPLALQNLFLYTFGVLLNLGL) traverse the membrane as a helical segment. Residues 236–248 (HAGGGPGPGLLEG) lie on the Cytoplasmic side of the membrane. The helical transmembrane segment at 249–271 (FSGWAALVVLSQALNGLLMSAVM) threads the bilayer. The Lumenal segment spans residues 272-279 (KHGSSITR). A helical membrane pass occupies residues 280-300 (LFVVSCSLVVNAVLSAALLRL). Over 301 to 324 (QLTAAFFLAALLIGLAVHLYYGSR) the chain is Cytoplasmic.

The protein belongs to the nucleotide-sugar transporter family. SLC35A subfamily. Found in a complex with SLC35A2 and SLC35A3.

The protein localises to the golgi apparatus membrane. The enzyme catalyses CDP-L-ribitol(in) + CDP(out) = CDP-L-ribitol(out) + CDP(in). Mediates the transport of CDP-ribitol. Does not exhibit CMP-sialic acid, UDP-galactose and UDP-N-acetylglucosamine transport activity. The polypeptide is Probable UDP-sugar transporter protein SLC35A4 (Sus scrofa (Pig)).